Here is a 578-residue protein sequence, read N- to C-terminus: Tetratricopeptide repeat protein ttc-39B (578 aa).

3 TPR repeats span residues 297–330 (AIMLFMKARLLLISGDIEAAIHYFNMSIESQDVY), 481–514 (CLYYFLKGVALRHLSLHAQAEECFKIVLERESSI), and 522–554 (PNATYELAMLRISEQQFMEAQTLLDKARAYKSY).

This Caenorhabditis elegans protein is Tetratricopeptide repeat protein ttc-39B.